The sequence spans 274 residues: Shikimate dehydrogenase (NADP(+)) (274 aa).

Shikimate-binding positions include 14 to 16 (SKS) and Thr61. Lys65 acts as the Proton acceptor in catalysis. Positions 86 and 102 each coordinate shikimate. Residues 126–130 (GAGGA), 150–155 (NRTAEK), and Met214 contribute to the NADP(+) site. Position 216 (Tyr216) interacts with shikimate. Gly239 contacts NADP(+).

This sequence belongs to the shikimate dehydrogenase family. As to quaternary structure, homodimer.

It carries out the reaction shikimate + NADP(+) = 3-dehydroshikimate + NADPH + H(+). It functions in the pathway metabolic intermediate biosynthesis; chorismate biosynthesis; chorismate from D-erythrose 4-phosphate and phosphoenolpyruvate: step 4/7. Its function is as follows. Involved in the biosynthesis of the chorismate, which leads to the biosynthesis of aromatic amino acids. Catalyzes the reversible NADPH linked reduction of 3-dehydroshikimate (DHSA) to yield shikimate (SA). This Pseudoalteromonas translucida (strain TAC 125) protein is Shikimate dehydrogenase (NADP(+)).